A 203-amino-acid chain; its full sequence is Recombination protein RecR (203 aa).

The C4-type zinc finger occupies 56-71 (CAVCGNVSDEERCRIC). Positions 79–179 (SLICVVEEPK…TVTRIASGLP (101 aa)) constitute a Toprim domain.

Belongs to the RecR family.

Functionally, may play a role in DNA repair. It seems to be involved in an RecBC-independent recombinational process of DNA repair. It may act with RecF and RecO. This is Recombination protein RecR from Mycolicibacterium vanbaalenii (strain DSM 7251 / JCM 13017 / BCRC 16820 / KCTC 9966 / NRRL B-24157 / PYR-1) (Mycobacterium vanbaalenii).